The following is a 423-amino-acid chain: SH2 domain-containing protein 5 (423 aa).

The PID domain occupies 28-146 (AQYVGSFPVD…LLCRSFQLAY (119 aa)). The region spanning 296–392 (WAFAGISRPC…LDMGRLNPTY (97 aa)) is the SH2 domain. The segment at 392–423 (YEEQDCGPPGRPPRTLRPLSHAKSEAELQGLG) is disordered.

As to quaternary structure, interacts with BCR.

It localises to the postsynaptic density. May be involved in synaptic plasticity regulation through the control of Rac-GTP levels. The polypeptide is SH2 domain-containing protein 5 (Homo sapiens (Human)).